Reading from the N-terminus, the 503-residue chain is Probable cytosol aminopeptidase (503 aa).

Mn(2+)-binding residues include Lys-274 and Asp-279. Lys-286 is a catalytic residue. Mn(2+) is bound by residues Asp-297, Asp-356, and Glu-358. Arg-360 is a catalytic residue.

It belongs to the peptidase M17 family. The cofactor is Mn(2+).

Its subcellular location is the cytoplasm. It carries out the reaction Release of an N-terminal amino acid, Xaa-|-Yaa-, in which Xaa is preferably Leu, but may be other amino acids including Pro although not Arg or Lys, and Yaa may be Pro. Amino acid amides and methyl esters are also readily hydrolyzed, but rates on arylamides are exceedingly low.. The catalysed reaction is Release of an N-terminal amino acid, preferentially leucine, but not glutamic or aspartic acids.. Presumably involved in the processing and regular turnover of intracellular proteins. Catalyzes the removal of unsubstituted N-terminal amino acids from various peptides. In Burkholderia orbicola (strain MC0-3), this protein is Probable cytosol aminopeptidase.